A 175-amino-acid chain; its full sequence is Nicotinamide-nucleotide adenylyltransferase 1 (175 aa).

It belongs to the archaeal NMN adenylyltransferase family.

The protein localises to the cytoplasm. The catalysed reaction is beta-nicotinamide D-ribonucleotide + ATP + H(+) = diphosphate + NAD(+). It participates in cofactor biosynthesis; NAD(+) biosynthesis; NAD(+) from nicotinamide D-ribonucleotide: step 1/1. The sequence is that of Nicotinamide-nucleotide adenylyltransferase 1 from Sulfolobus acidocaldarius (strain ATCC 33909 / DSM 639 / JCM 8929 / NBRC 15157 / NCIMB 11770).